We begin with the raw amino-acid sequence, 122 residues long: Large ribosomal subunit protein uL14 (122 aa).

It belongs to the universal ribosomal protein uL14 family. As to quaternary structure, part of the 50S ribosomal subunit. Forms a cluster with proteins L3 and L19. In the 70S ribosome, L14 and L19 interact and together make contacts with the 16S rRNA in bridges B5 and B8.

Binds to 23S rRNA. Forms part of two intersubunit bridges in the 70S ribosome. The protein is Large ribosomal subunit protein uL14 of Sinorhizobium fredii (strain NBRC 101917 / NGR234).